The primary structure comprises 513 residues: Cytochrome P450 1A2 (513 aa).

An O-linked (GlcNAc) serine glycan is attached at Ser-68. Phe-225 provides a ligand contact to substrate. Cys-456 contributes to the heme binding site.

This sequence belongs to the cytochrome P450 family. As to quaternary structure, interacts with PGRMC1; the interaction requires PGRMC1 homodimerization. Requires heme as cofactor. Found in lung and liver.

It is found in the endoplasmic reticulum membrane. It localises to the microsome membrane. It carries out the reaction an organic molecule + reduced [NADPH--hemoprotein reductase] + O2 = an alcohol + oxidized [NADPH--hemoprotein reductase] + H2O + H(+). The enzyme catalyses 17beta-estradiol + reduced [NADPH--hemoprotein reductase] + O2 = 2-hydroxy-17beta-estradiol + oxidized [NADPH--hemoprotein reductase] + H2O + H(+). The catalysed reaction is 17beta-estradiol + reduced [NADPH--hemoprotein reductase] + O2 = 4-hydroxy-17beta-estradiol + oxidized [NADPH--hemoprotein reductase] + H2O + H(+). It catalyses the reaction estrone + reduced [NADPH--hemoprotein reductase] + O2 = 2-hydroxyestrone + oxidized [NADPH--hemoprotein reductase] + H2O + H(+). It carries out the reaction estrone + reduced [NADPH--hemoprotein reductase] + O2 = 4-hydroxyestrone + oxidized [NADPH--hemoprotein reductase] + H2O + H(+). The enzyme catalyses cholesterol + reduced [NADPH--hemoprotein reductase] + O2 = 25-hydroxycholesterol + oxidized [NADPH--hemoprotein reductase] + H2O + H(+). The catalysed reaction is all-trans-retinol + reduced [NADPH--hemoprotein reductase] + O2 = all-trans-retinal + oxidized [NADPH--hemoprotein reductase] + 2 H2O + H(+). It catalyses the reaction all-trans-retinal + reduced [NADPH--hemoprotein reductase] + O2 = all-trans-retinoate + oxidized [NADPH--hemoprotein reductase] + H2O + 2 H(+). It carries out the reaction (5Z,8Z,11Z,14Z)-eicosatetraenoate + reduced [NADPH--hemoprotein reductase] + O2 = (14R,15S)-epoxy-(5Z,8Z,11Z)-eicosatrienoate + oxidized [NADPH--hemoprotein reductase] + H2O + H(+). The enzyme catalyses (5Z,8Z,11Z,14Z)-eicosatetraenoate + reduced [NADPH--hemoprotein reductase] + O2 = (14S,15R)-epoxy-(5Z,8Z,11Z)-eicosatrienoate + oxidized [NADPH--hemoprotein reductase] + H2O + H(+). The catalysed reaction is (5Z,8Z,11Z,14Z,17Z)-eicosapentaenoate + reduced [NADPH--hemoprotein reductase] + O2 = (17R,18S)-epoxy-(5Z,8Z,11Z,14Z)-eicosatetraenoate + oxidized [NADPH--hemoprotein reductase] + H2O + H(+). It catalyses the reaction (4Z,7Z,10Z,13Z,16Z,19Z)-docosahexaenoate + reduced [NADPH--hemoprotein reductase] + O2 = (19R,20S)-epoxy-(4Z,7Z,10Z,13Z,16Z)-docosapentaenoate + oxidized [NADPH--hemoprotein reductase] + H2O + H(+). It carries out the reaction (5S)-hydroperoxy-(6E,8Z,11Z,14Z)-eicosatetraenoate = 5-oxo-(6E,8Z,11Z,14Z)-eicosatetraenoate + H2O. The enzyme catalyses (12S)-hydroperoxy-(5Z,8Z,10E,14Z)-eicosatetraenoate = 12-oxo-(5Z,8Z,10E,14Z)-eicosatetraenoate + H2O. The catalysed reaction is (15S)-hydroperoxy-(5Z,8Z,11Z,13E)-eicosatetraenoate = 15-oxo-(5Z,8Z,11Z,13E)-eicosatetraenoate + H2O. It catalyses the reaction (13S)-hydroperoxy-(9Z,11E)-octadecadienoate = 13-oxo-(9Z,11E)-octadecadienoate + H2O. It carries out the reaction (5Z,8Z,11Z,14Z)-eicosatetraenoate + reduced [NADPH--hemoprotein reductase] + O2 = 13-hydroxy-(5Z,8Z,11Z,14Z)-eicosatetraenoate + oxidized [NADPH--hemoprotein reductase] + H2O + H(+). The enzyme catalyses (5Z,8Z,11Z,14Z)-eicosatetraenoate + reduced [NADPH--hemoprotein reductase] + O2 = 19-hydroxy-(5Z,8Z,11Z,14Z)-eicosatetraenoate + oxidized [NADPH--hemoprotein reductase] + H2O + H(+). The catalysed reaction is (9Z,12Z)-octadecadienoate + reduced [NADPH--hemoprotein reductase] + O2 = 11-hydroxy-(9Z,12Z)-octadecadienoate + oxidized [NADPH--hemoprotein reductase] + H2O + H(+). It participates in cofactor metabolism; retinol metabolism. It functions in the pathway steroid metabolism; cholesterol metabolism. The protein operates within lipid metabolism; arachidonate metabolism. In terms of biological role, a cytochrome P450 monooxygenase involved in the metabolism of various endogenous substrates, including fatty acids, steroid hormones and vitamins. Mechanistically, uses molecular oxygen inserting one oxygen atom into a substrate, and reducing the second into a water molecule, with two electrons provided by NADPH via cytochrome P450 reductase (NADPH--hemoprotein reductase). Catalyzes the hydroxylation of carbon-hydrogen bonds. Exhibits high catalytic activity for the formation of hydroxyestrogens from estrone (E1) and 17beta-estradiol (E2), namely 2-hydroxy E1 and E2. Metabolizes cholesterol toward 25-hydroxycholesterol, a physiological regulator of cellular cholesterol homeostasis. May act as a major enzyme for all-trans retinoic acid biosynthesis in the liver. Catalyzes two successive oxidative transformation of all-trans retinol to all-trans retinal and then to the active form all-trans retinoic acid. Primarily catalyzes stereoselective epoxidation of the last double bond of polyunsaturated fatty acids (PUFA), displaying a strong preference for the (R,S) stereoisomer. Catalyzes bisallylic hydroxylation and omega-1 hydroxylation of PUFA. May also participate in eicosanoids metabolism by converting hydroperoxide species into oxo metabolites (lipoxygenase-like reaction, NADPH-independent). Plays a role in the oxidative metabolism of xenobiotics. Catalyzes the N-hydroxylation of heterocyclic amines and the O-deethylation of phenacetin. Metabolizes caffeine via N3-demethylation. The sequence is that of Cytochrome P450 1A2 (CYP1A2) from Mesocricetus auratus (Golden hamster).